The chain runs to 344 residues: Ribosomal RNA large subunit methyltransferase Cfr (344 aa).

Glu90 serves as the catalytic Proton acceptor. In terms of domain architecture, Radical SAM core spans 97–330 (KQGWESFCIS…ATVRTQFGSE (234 aa)). A disulfide bridge links Cys104 with Cys335. [4Fe-4S] cluster contacts are provided by Cys111, Cys115, and Cys118. S-adenosyl-L-methionine contacts are provided by residues 157–158 (GE), Ser188, 211–213 (SLH), and Asn292. The S-methylcysteine intermediate role is filled by Cys335.

The protein belongs to the radical SAM superfamily. RlmN family. Cfr subfamily. [4Fe-4S] cluster serves as cofactor.

It is found in the cytoplasm. The catalysed reaction is adenosine(2503) in 23S rRNA + 2 reduced [2Fe-2S]-[ferredoxin] + 2 S-adenosyl-L-methionine = 8-methyladenosine(2503) in 23S rRNA + 5'-deoxyadenosine + L-methionine + 2 oxidized [2Fe-2S]-[ferredoxin] + S-adenosyl-L-homocysteine. Functionally, specifically methylates position 8 of adenine 2503 in 23S rRNA. Confers resistance to some classes of antibiotics. In Clostridium botulinum (strain Langeland / NCTC 10281 / Type F), this protein is Ribosomal RNA large subunit methyltransferase Cfr.